We begin with the raw amino-acid sequence, 418 residues long: UPF0754 membrane protein alr5253 (418 aa).

A run of 2 helical transmembrane segments spans residues 10–30 (WSHL…GYFT) and 394–414 (IVSL…AFFI).

Belongs to the UPF0754 family.

The protein resides in the cell inner membrane. The polypeptide is UPF0754 membrane protein alr5253 (Nostoc sp. (strain PCC 7120 / SAG 25.82 / UTEX 2576)).